Reading from the N-terminus, the 187-residue chain is UPF0340 protein SPP_0683 (187 aa).

Belongs to the UPF0340 family.

This chain is UPF0340 protein SPP_0683, found in Streptococcus pneumoniae (strain P1031).